The primary structure comprises 113 residues: UPF0212 protein MmarC6_1165 (113 aa).

It belongs to the UPF0212 family.

The polypeptide is UPF0212 protein MmarC6_1165 (Methanococcus maripaludis (strain C6 / ATCC BAA-1332)).